The sequence spans 234 residues: Synaptogyrin-4 (234 aa).

The 152-residue stretch at 18–169 (FLKRPKAITR…QAYLAFQELR (152 aa)) folds into the MARVEL domain. The next 4 helical transmembrane spans lie at 25–45 (ITRI…LTDG), 66–86 (CSIA…FLAL), 104–124 (LLDL…FCFL), and 145–165 (AAIT…YLAF). The disordered stretch occupies residues 191–226 (SPPSAASPVNTPTTGPHGPSYASSSLSPYLSTPKAP). Positions 209–221 (PSYASSSLSPYLS) are enriched in low complexity.

Belongs to the synaptogyrin family.

Its subcellular location is the membrane. In Bos taurus (Bovine), this protein is Synaptogyrin-4 (SYNGR4).